The chain runs to 206 residues: Probable nicotinate-nucleotide adenylyltransferase (206 aa).

Belongs to the NadD family.

The enzyme catalyses nicotinate beta-D-ribonucleotide + ATP + H(+) = deamido-NAD(+) + diphosphate. It participates in cofactor biosynthesis; NAD(+) biosynthesis; deamido-NAD(+) from nicotinate D-ribonucleotide: step 1/1. In terms of biological role, catalyzes the reversible adenylation of nicotinate mononucleotide (NaMN) to nicotinic acid adenine dinucleotide (NaAD). This is Probable nicotinate-nucleotide adenylyltransferase from Paenarthrobacter aurescens (strain TC1).